Consider the following 430-residue polypeptide: Enolase (430 aa).

Position 165 (Gln-165) interacts with (2R)-2-phosphoglycerate. Glu-207 serves as the catalytic Proton donor. Asp-244, Glu-287, and Asp-314 together coordinate Mg(2+). The (2R)-2-phosphoglycerate site is built by Lys-339, Arg-368, Ser-369, and Lys-390. The active-site Proton acceptor is Lys-339.

This sequence belongs to the enolase family. In terms of assembly, component of the RNA degradosome, a multiprotein complex involved in RNA processing and mRNA degradation. It depends on Mg(2+) as a cofactor.

It localises to the cytoplasm. The protein localises to the secreted. The protein resides in the cell surface. It carries out the reaction (2R)-2-phosphoglycerate = phosphoenolpyruvate + H2O. The protein operates within carbohydrate degradation; glycolysis; pyruvate from D-glyceraldehyde 3-phosphate: step 4/5. Functionally, catalyzes the reversible conversion of 2-phosphoglycerate (2-PG) into phosphoenolpyruvate (PEP). It is essential for the degradation of carbohydrates via glycolysis. The polypeptide is Enolase (Xylella fastidiosa (strain M23)).